Here is a 296-residue protein sequence, read N- to C-terminus: MFARLSRSNKFLPIALGVGAASIATAIILQRNYSIMNDTSKAFLGDNEWIDLPIIKIEKLSHDTKRFTFALPKKDQVSGLITASCILAKFVTPKGSNVIRPYTPVSDNGTKGKMELVVKHYENGKFTSHLFGLKENDTVSFKGPITKWEWKPNSYDSITLLGAGTGINPLYQLVHHIAENPEDNTKIHLYYGNKTPEDILLKSELDNLQKKYPDQVKITYFVDKAEGNFEGETGFITKDYLSHQAPKPSEKNQVFVCGPPPFMKAYSGPKVSPQDQGELTGILAELGYSKSNVFKF.

The chain crosses the membrane as a helical span at residues 12 to 29 (LPIALGVGAASIATAIIL). The region spanning 47–151 (NEWIDLPIIK…KGPITKWEWK (105 aa)) is the FAD-binding FR-type domain. 154–189 (SYDSITLLGAGTGINPLYQLVHHIAENPEDNTKIHL) is a binding site for FAD.

It belongs to the flavoprotein pyridine nucleotide cytochrome reductase family. Requires FAD as cofactor.

The protein resides in the mitochondrion outer membrane. It carries out the reaction 2 Fe(III)-[cytochrome b5] + NADH = 2 Fe(II)-[cytochrome b5] + NAD(+) + H(+). May mediate the reduction of outer membrane cytochrome b5. The protein is NADH-cytochrome b5 reductase 2 (MCR1) of Kluyveromyces lactis (strain ATCC 8585 / CBS 2359 / DSM 70799 / NBRC 1267 / NRRL Y-1140 / WM37) (Yeast).